An 84-amino-acid chain; its full sequence is RNA-binding protein Hfq (84 aa).

One can recognise a Sm domain in the interval 11 to 71; it reads DTFLNHVRKN…ISTIMPGHPV (61 aa).

Belongs to the Hfq family. As to quaternary structure, homohexamer.

Functionally, RNA chaperone that binds small regulatory RNA (sRNAs) and mRNAs to facilitate mRNA translational regulation in response to envelope stress, environmental stress and changes in metabolite concentrations. Also binds with high specificity to tRNAs. The chain is RNA-binding protein Hfq from Methylobacterium nodulans (strain LMG 21967 / CNCM I-2342 / ORS 2060).